A 273-amino-acid chain; its full sequence is HTH-type transcriptional activator RhaS (273 aa).

One can recognise an HTH araC/xylS-type domain in the interval 174–272 (YQLLDWLQNN…SQSPRDLRSQ (99 aa)). 2 consecutive DNA-binding regions (H-T-H motif) follow at residues 191 to 212 (PELA…KNKT) and 239 to 262 (VTDI…KREF).

Binds DNA as a dimer.

Its subcellular location is the cytoplasm. Functionally, activates expression of the rhaBAD and rhaT operons. The protein is HTH-type transcriptional activator RhaS of Yersinia pestis bv. Antiqua (strain Antiqua).